The chain runs to 224 residues: UPF0441 protein ECA0329 (224 aa).

The segment at 180-224 (TALAPKPATTSTITRGGFGETVAKQNSMQRSSASSNSSSSRSMGG) is disordered. A compositionally biased stretch (low complexity) spans 204–224 (QNSMQRSSASSNSSSSRSMGG).

This sequence belongs to the UPF0441 family.

This Pectobacterium atrosepticum (strain SCRI 1043 / ATCC BAA-672) (Erwinia carotovora subsp. atroseptica) protein is UPF0441 protein ECA0329.